We begin with the raw amino-acid sequence, 163 residues long: 2-C-methyl-D-erythritol 2,4-cyclodiphosphate synthase (163 aa).

A divalent metal cation is bound by residues Asp-11 and His-13. Residues 11–13 (DIH) and 37–38 (HS) contribute to the 4-CDP-2-C-methyl-D-erythritol 2-phosphate site. His-45 contributes to the a divalent metal cation binding site. Residues 59-61 (DIG), 64-68 (FSDTD), 103-109 (AQVPKMA), and Arg-145 contribute to the 4-CDP-2-C-methyl-D-erythritol 2-phosphate site.

Belongs to the IspF family. As to quaternary structure, homotrimer. Requires a divalent metal cation as cofactor.

It carries out the reaction 4-CDP-2-C-methyl-D-erythritol 2-phosphate = 2-C-methyl-D-erythritol 2,4-cyclic diphosphate + CMP. Its pathway is isoprenoid biosynthesis; isopentenyl diphosphate biosynthesis via DXP pathway; isopentenyl diphosphate from 1-deoxy-D-xylulose 5-phosphate: step 4/6. Involved in the biosynthesis of isopentenyl diphosphate (IPP) and dimethylallyl diphosphate (DMAPP), two major building blocks of isoprenoid compounds. Catalyzes the conversion of 4-diphosphocytidyl-2-C-methyl-D-erythritol 2-phosphate (CDP-ME2P) to 2-C-methyl-D-erythritol 2,4-cyclodiphosphate (ME-CPP) with a corresponding release of cytidine 5-monophosphate (CMP). The polypeptide is 2-C-methyl-D-erythritol 2,4-cyclodiphosphate synthase (Nitrosomonas europaea (strain ATCC 19718 / CIP 103999 / KCTC 2705 / NBRC 14298)).